The sequence spans 61 residues: Large ribosomal subunit protein uL30 (61 aa).

This sequence belongs to the universal ribosomal protein uL30 family. In terms of assembly, part of the 50S ribosomal subunit.

The polypeptide is Large ribosomal subunit protein uL30 (Corynebacterium diphtheriae (strain ATCC 700971 / NCTC 13129 / Biotype gravis)).